Consider the following 180-residue polypeptide: Protein sll1483 (180 aa).

The N-terminal stretch at 1–26 (MKTAARIVAFTALTGFALGMPTVAMA) is a signal peptide. In terms of domain architecture, FAS1 spans 45 to 176 (AMTIVEVAAG…GVIHVIDQVI (132 aa)).

The polypeptide is Protein sll1483 (Synechocystis sp. (strain ATCC 27184 / PCC 6803 / Kazusa)).